The sequence spans 282 residues: sn-glycerol-3-phosphate transport system permease protein UgpE (282 aa).

The next 6 helical transmembrane spans lie at 14 to 34 (LMLIIGIIIVVFPIYYTFVAS), 86 to 106 (IAIAVGKIVISFLSAFAIVFF), 112 to 132 (MAFFWMIFITLMLPVEVRILP), 136 to 156 (VIVDLGLIDTYAGLTLPLMAS), 201 to 221 (IAALFVILFIYGWTQYLWPLL), and 248 to 268 (WNYVMVTAILAIIPPVAVVVL). The ABC transmembrane type-1 domain occupies 78–269 (LFNTFVVAIA…IPPVAVVVLM (192 aa)).

This sequence belongs to the binding-protein-dependent transport system permease family. As to quaternary structure, the complex is composed of two ATP-binding proteins (UgpC), two transmembrane proteins (UgpA and UgpE) and a solute-binding protein (UgpB).

The protein resides in the cell inner membrane. Its function is as follows. Part of the ABC transporter complex UgpBAEC involved in sn-glycerol-3-phosphate (G3P) import. Probably responsible for the translocation of the substrate across the membrane. The polypeptide is sn-glycerol-3-phosphate transport system permease protein UgpE (ugpE) (Rhizobium meliloti (strain 1021) (Ensifer meliloti)).